Here is a 620-residue protein sequence, read N- to C-terminus: Glutathione-regulated potassium-efflux system protein KefC (620 aa).

Helical transmembrane passes span 4–24 (HTLIQALIYLGSAALIVPIAV), 26–46 (LGLGSVLGYLIAGCIIGPWGL), 54–74 (SILHFAEIGVVLMLFIIGLEL), 90–110 (GALQMVICGGLLGLFCMLLGL), 114–134 (VAELIGMTLALSSTAIAMQAM), 149–169 (FAVLLFQDIAAIPLVAMIPLL), 178–198 (MGAFALSALKVAGALVLVVLL), 218–238 (VFSAVALFLVFGFGLLLEEVG), 270–290 (GLLLGLFFIGVGMSIDFGTLI), 294–314 (LRIVILLLGFLIIKIAMLWLI), 327–347 (WFAVLLGQGSEFAFVVFGAAQ), and 359–379 (SLTLAVALSMAATPILLVILN). An RCK N-terminal domain is found at 399 to 518 (QPRVIIAGFG…AGVEKPERET (120 aa)). Positions 597–620 (GWQGTEEGKHTGNMADEPETKPSS) are disordered.

Belongs to the monovalent cation:proton antiporter 2 (CPA2) transporter (TC 2.A.37) family. KefC subfamily. In terms of assembly, homodimer. Interacts with the regulatory subunit KefF.

The protein localises to the cell inner membrane. Functionally, pore-forming subunit of a potassium efflux system that confers protection against electrophiles. Catalyzes K(+)/H(+) antiport. The chain is Glutathione-regulated potassium-efflux system protein KefC from Escherichia coli O17:K52:H18 (strain UMN026 / ExPEC).